An 832-amino-acid chain; its full sequence is WD repeat-containing protein 75 (832 aa).

WD repeat units lie at residues 4–43 (KTDIRVVRCGGSKINFRPPIISHDSRFVLCVSGDSVKVYS), 47–86 (EEWLHNLQGHNNQVTGIAFNPANQLQVYSCSADGTVKLWD), 90–134 (GILI…QLVA), 148–187 (KELSTVASKISPNPSCTAFGRGGEFIAFSRHLQLNVYFFR), 196–233 (LKATDKKAGKNAFTCVACHPTDDCIASGHEDGKIRLWR), 239–278 (KEYTYSTKHWHHDAVNHLCFTPEGSNLLSGGIESVLVQWQ), 281–320 (DMSKKEFLPRLGGSISHVSASADGQLFCTAHSDNKISIIE), 326–364 (SGLIQGLVRGDAVSTDLMIDPRSKALVLNGKPGHLQFYS), 378–425 (QQEY…KLWA), 432–474 (SFVL…KAWC), 485–523 (YWSCDFVGSYHNLKPKNCCFSADGSILAVSFQEVLTLWS), 527–567 (WELL…CCWN), and 572–609 (ALEWSTSVDVSRLQSDPLSENVAAFSFESKHTHLFVFK). Disordered stretches follow at residues 704–723 (QHKLNTETQEPADKPQHTQG) and 759–811 (VREE…AQER). A compositionally biased stretch (acidic residues) spans 764–785 (DSSEQEMDSEKEEEESEEEMEA). A compositionally biased stretch (basic and acidic residues) spans 799 to 811 (DEQKPKLSKAQER).

In terms of assembly, component of the proposed t-UTP subcomplex of the ribosomal small subunit (SSU) processome. SSU processome is composed of more than 70 proteins and the RNA chaperone small nucleolar RNA (snoRNA) U3.

It localises to the nucleus. The protein localises to the nucleolus. Its function is as follows. Ribosome biogenesis factor. Part of the small subunit (SSU) processome, first precursor of the small eukaryotic ribosomal subunit. During the assembly of the SSU processome in the nucleolus, many ribosome biogenesis factors, an RNA chaperone and ribosomal proteins associate with the nascent pre-rRNA and work in concert to generate RNA folding, modifications, rearrangements and cleavage as well as targeted degradation of pre-ribosomal RNA by the RNA exosome. Involved in nucleolar processing of pre-18S ribosomal RNA. Required for optimal pre-ribosomal RNA transcription by RNA polymerase I. The protein is WD repeat-containing protein 75 (wdr75) of Danio rerio (Zebrafish).